We begin with the raw amino-acid sequence, 65 residues long: Putative per-hexamer repeat protein 2 (65 aa).

This is Putative per-hexamer repeat protein 2 (Phxr2) from Mus musculus (Mouse).